We begin with the raw amino-acid sequence, 86 residues long: Weak toxin 2 (86 aa).

An N-terminal signal peptide occupies residues 1-23 (MKTLLLTLVVVAIVCLDLGYTLT). Intrachain disulfides connect Cys-24/Cys-45, Cys-27/Cys-32, Cys-38/Cys-63, Cys-67/Cys-78, and Cys-79/Cys-84.

This sequence belongs to the three-finger toxin family. Ancestral subfamily. Orphan group II sub-subfamily. As to expression, expressed by the venom gland.

It localises to the secreted. Functionally, binds with low affinity to muscular (alpha-1-beta-1-delta-epsilon/CHRNA1-CHRNB1-CHRND-CHRNE) and very low affinity to neuronal (alpha-7/CHRNA7) nicotinic acetylcholine receptor (nAChR). This chain is Weak toxin 2, found in Bungarus candidus (Malayan krait).